Here is a 496-residue protein sequence, read N- to C-terminus: MGHQEEPPRICKTPSGHEQGEGPAEKTSKPSTEEVGWDGPTDPARPVNWSRKKKWWNMGIISYLTFLTPLTSSIVAPAQGLVMKDFHSTNRTLASFVVSIYLVGFAVGPLFLAPLSEIYGRLRVYQVGTFIFTIWNIAGAVAPNVGALLVFRLFAGISGSGPVTLGAGSVADMFARQERGVAMSLYGLGPLLGPVIGPIAGGYLSQAQGWRWVFWLLAIVSGVAVILVLFVLSESYEPVLLRQKAKRIRRENSSVEVNAGQALKLDSRKVFIQAITRPTKLLFLTPNVALFSLYTGVVFGYLYLLFTTVTEVYETTYHFSQGATGLVYIGIGVGALIGISCFGALSDKIQNILIARNNGQAEPEFRLPPLIPGSFLIPIGLFWYGWSTQMHIHWIMPIIGLGWVGCGMIATLLPIQAYLVDAFGEYAASAIAANTVVRSIVGAFLPLAGPSMYATLGLGWGNSLLGFVALGLLPVPVVFYFYGKKIRMNSRYQVSV.

Residues 1-45 form a disordered region; the sequence is MGHQEEPPRICKTPSGHEQGEGPAEKTSKPSTEEVGWDGPTDPAR. The segment covering 18-32 has biased composition (basic and acidic residues); that stretch reads EQGEGPAEKTSKPST. Asn48 carries N-linked (GlcNAc...) asparagine glycosylation. The helical transmembrane segment at 58-78 threads the bilayer; sequence MGIISYLTFLTPLTSSIVAPA. Asn90 carries N-linked (GlcNAc...) asparagine glycosylation. Helical transmembrane passes span 93 to 113, 130 to 150, 154 to 174, 180 to 200, and 212 to 232; these read LASF…LFLA, FIFT…ALLV, FAGI…ADMF, GVAM…GPIA, and WVFW…LFVL. The N-linked (GlcNAc...) asparagine glycan is linked to Asn252. The next 6 helical transmembrane spans lie at 288–308, 325–345, 367–387, 395–415, 427–449, and 463–483; these read VALF…LFTT, GLVY…FGAL, LPPL…YGWS, IMPI…LLPI, AASA…PLAG, and SLLG…YFYG.

It belongs to the major facilitator superfamily.

The protein resides in the membrane. In terms of biological role, MFS transporter; part of the gene cluster that mediates the biosynthesis of the fungal neurotoxin cyclopiazonic acid (CPA), a nanomolar inhibitor of Ca(2+)-ATPase with a unique pentacyclic indole tetramic acid scaffold. The sequence is that of MFS transporter cpaT from Aspergillus oryzae (Yellow koji mold).